The primary structure comprises 492 residues: N-succinylglutamate 5-semialdehyde dehydrogenase (492 aa).

220-225 provides a ligand contact to NAD(+); it reads GSASTG. Active-site residues include E243 and C277.

Belongs to the aldehyde dehydrogenase family. AstD subfamily.

The catalysed reaction is N-succinyl-L-glutamate 5-semialdehyde + NAD(+) + H2O = N-succinyl-L-glutamate + NADH + 2 H(+). The protein operates within amino-acid degradation; L-arginine degradation via AST pathway; L-glutamate and succinate from L-arginine: step 4/5. Functionally, catalyzes the NAD-dependent reduction of succinylglutamate semialdehyde into succinylglutamate. This is N-succinylglutamate 5-semialdehyde dehydrogenase from Salmonella typhi.